A 115-amino-acid polypeptide reads, in one-letter code: Beta-2-microglobulin (115 aa).

The signal sequence occupies residues 1–16 (MKIALVLLSLLALTLA). In terms of domain architecture, Ig-like C1-type spans 22-113 (PPVVKVYTAE…GNPSKKYRLD (92 aa)).

Belongs to the beta-2-microglobulin family. As to quaternary structure, heterodimer of an alpha chain and a beta chain. Beta-2-microglobulin is the beta-chain of major histocompatibility complex class I molecules.

Its subcellular location is the secreted. Its function is as follows. Component of the class I major histocompatibility complex (MHC). Involved in the presentation of peptide antigens to the immune system. This chain is Beta-2-microglobulin (b2m), found in Xenopus laevis (African clawed frog).